The primary structure comprises 734 residues: NAD(P)H-quinone oxidoreductase subunit 5, chloroplastic (734 aa).

Helical transmembrane passes span 9–29 (WIIP…LFFF), 40–60 (YAII…DLLW), 89–109 (IDPL…TVMI), 121–140 (YVRF…GLVI), 144–166 (LIQI…GFWF), 185–205 (GDFG…SFKF), 219–239 (HEVS…GPVA), 258–278 (TPIS…FLVA), 289–311 (LVMS…VALA), 318–338 (VLAY…GIGS), 395–415 (GTTF…ACFW), and 425–445 (WLYF…TGFY). The disordered stretch occupies residues 512–534 (DKNVKNSVSTQSSREEYSPHPKE). Over residues 524-534 (SREEYSPHPKE) the composition is skewed to basic and acidic residues. 3 helical membrane passes run 539 to 559 (MLFP…IGVP), 601 to 621 (VGTA…IPFF), and 707 to 727 (ISYY…VVIN).

Belongs to the complex I subunit 5 family. As to quaternary structure, NDH is composed of at least 16 different subunits, 5 of which are encoded in the nucleus.

The protein localises to the plastid. It localises to the chloroplast thylakoid membrane. It carries out the reaction a plastoquinone + NADH + (n+1) H(+)(in) = a plastoquinol + NAD(+) + n H(+)(out). The catalysed reaction is a plastoquinone + NADPH + (n+1) H(+)(in) = a plastoquinol + NADP(+) + n H(+)(out). In terms of biological role, NDH shuttles electrons from NAD(P)H:plastoquinone, via FMN and iron-sulfur (Fe-S) centers, to quinones in the photosynthetic chain and possibly in a chloroplast respiratory chain. The immediate electron acceptor for the enzyme in this species is believed to be plastoquinone. Couples the redox reaction to proton translocation, and thus conserves the redox energy in a proton gradient. The polypeptide is NAD(P)H-quinone oxidoreductase subunit 5, chloroplastic (ndhF) (Huperzia lucidula (Shining clubmoss)).